A 431-amino-acid polypeptide reads, in one-letter code: Enolase (431 aa).

Glutamine 167 serves as a coordination point for (2R)-2-phosphoglycerate. The active-site Proton donor is the glutamate 209. Residues aspartate 246, glutamate 289, and aspartate 316 each contribute to the Mg(2+) site. 4 residues coordinate (2R)-2-phosphoglycerate: lysine 341, arginine 370, serine 371, and lysine 392. Lysine 341 functions as the Proton acceptor in the catalytic mechanism.

Belongs to the enolase family. Component of the RNA degradosome, a multiprotein complex involved in RNA processing and mRNA degradation. Mg(2+) serves as cofactor.

It localises to the cytoplasm. It is found in the secreted. The protein resides in the cell surface. It catalyses the reaction (2R)-2-phosphoglycerate = phosphoenolpyruvate + H2O. The protein operates within carbohydrate degradation; glycolysis; pyruvate from D-glyceraldehyde 3-phosphate: step 4/5. Catalyzes the reversible conversion of 2-phosphoglycerate (2-PG) into phosphoenolpyruvate (PEP). It is essential for the degradation of carbohydrates via glycolysis. This chain is Enolase, found in Shewanella putrefaciens (strain CN-32 / ATCC BAA-453).